The following is a 394-amino-acid chain: 2-oxoglutarate and iron-dependent oxygenase domain-containing protein CP2 (394 aa).

A disordered region spans residues 1-35 (MSSEQREGSQETTTTTVEGNGTIAGQNSHSAAPTT). A compositionally biased stretch (polar residues) spans 17-35 (VEGNGTIAGQNSHSAAPTT). Positions 248-347 (DSHHGFVVEY…RVNMLLWCRS (100 aa)) constitute a Fe2OG dioxygenase domain. Residues His268, Asp270, and His328 each contribute to the Fe cation site. Arg338 is a binding site for 2-oxoglutarate.

Fe(2+) is required as a cofactor. It depends on L-ascorbate as a cofactor. As to expression, expressed in roots, cotyledons, rosette leaves, cauline leaves, inflorescences and siliques.

The protein resides in the nucleus. Its subcellular location is the nucleoplasm. Its function is as follows. Participates in the epigenetic repression of flowering genes in association with ICU11. Functions in the repression of several members of the MADS-box transcription factors family, including SEP3, during vegetative development via histone modification. The protein is 2-oxoglutarate and iron-dependent oxygenase domain-containing protein CP2 of Arabidopsis thaliana (Mouse-ear cress).